We begin with the raw amino-acid sequence, 412 residues long: Peptidase T (412 aa).

Histidine 84 contributes to the Zn(2+) binding site. Residue aspartate 86 is part of the active site. Aspartate 146 lines the Zn(2+) pocket. Glutamate 179 functions as the Proton acceptor in the catalytic mechanism. Zn(2+) is bound by residues glutamate 180, aspartate 202, and histidine 385.

It belongs to the peptidase M20B family. Zn(2+) is required as a cofactor.

The protein resides in the cytoplasm. It carries out the reaction Release of the N-terminal residue from a tripeptide.. Functionally, cleaves the N-terminal amino acid of tripeptides. The sequence is that of Peptidase T from Haemophilus influenzae (strain ATCC 51907 / DSM 11121 / KW20 / Rd).